We begin with the raw amino-acid sequence, 965 residues long: Collagen alpha-1(I) chain (965 aa).

Over residues 1-21 (SVPGPMGPSGPRGLPGPPGPG) the composition is skewed to pro residues. Residues 1-965 (SVPGPMGPSG…PGPPGPPGPP (965 aa)) form a disordered region. Pro15, Pro18, Pro20, Pro29, Pro32, Pro35, Pro49, Pro64, Pro70, Pro79, and Pro85 each carry 4-hydroxyproline. Basic and acidic residues predominate over residues 52–66 (NGDDGEAGKPGRPGE). A 5-hydroxylysine; alternate modification is found at Lys88. O-linked (Gal...) hydroxylysine; alternate glycosylation occurs at Lys88. Phosphoserine is present on Ser94. The segment covering 102-118 (DAGPAGPKGEPGSPGEN) has biased composition (low complexity). Pro112, Pro115, Pro121, Pro130, Pro136, Pro157, Pro166, Pro169, Pro196, Pro199, Pro211, Pro217, Pro226, Pro232, Pro235, and Pro250 each carry 4-hydroxyproline. The span at 136-154 (PGASGPAGARGNDGATGAA) shows a compositional bias: low complexity. Residues 156 to 168 (PPGPTGPAGPPGF) show a composition bias toward pro residues. Residues 202–241 (AGAAGPAGNPGADGQPGAKGANGAPGIAGAPGFPGARGPS) are compositionally biased toward low complexity. Lys253 carries the 5-hydroxylysine modification. Pro259, Pro262, Pro273, Pro282, Pro297, Pro303, Pro312, and Pro318 each carry 4-hydroxyproline. The span at 307–327 (GERGGPGSRGFPGADGAGPKG) shows a compositional bias: gly residues. 5-hydroxylysine is present on Lys326. A 4-hydroxyproline mark is found at Pro335, Pro344, Pro350, Pro356, Pro365, Pro368, Pro377, Pro386, Pro392, Pro404, Pro413, Pro422, Pro425, Pro443, Pro460, Pro466, Pro472, Pro480, Pro492, Pro501, Pro509, Pro515, and Pro524. Residues 359 to 385 (KGLTGSPGSPGPDGKTGPPGPAGQDGR) are compositionally biased toward low complexity. Over residues 394-413 (ARGQAGVMGFPGPKGAAGEP) the composition is skewed to low complexity. Residues 472–482 (PGEADLGAPGP) show a composition bias toward low complexity. Lys536 is subject to 5-hydroxylysine. Residues Pro542, Pro557, and Pro563 each carry the 4-hydroxyproline modification. Positions 569-583 (SGPSGPAGPTGARGA) are enriched in low complexity. Ser572 is subject to Phosphoserine. 8 positions are modified to 4-hydroxyproline: Pro584, Pro590, Pro593, Pro602, Pro608, Pro626, Pro635, and Pro644. The segment covering 596-623 (AGFAGPPGADGQPGAKGEPGDAGAKGDA) has biased composition (low complexity). Residues 625-637 (PPGPAGPTGPPGP) are compositionally biased toward pro residues. Residue Lys647 is modified to 5-hydroxylysine. Positions 652-668 (SAGPPGATGFPGAAGRV) are enriched in low complexity. Residues Pro656 and Pro662 each carry the 4-hydroxyproline modification. Pro670 carries the 3-hydroxyproline modification. A 4-hydroxyproline mark is found at Pro671, Pro680, Pro683, Pro704, Pro713, Pro721, Pro730, Pro748, Pro757, Pro760, Pro766, Pro771, Pro777, Pro783, Pro791, and Pro797. Residues 697-706 (ETGPAGRPGE) show a composition bias toward low complexity. The segment covering 718–730 (KGSPGADGPAGAP) has biased composition (low complexity). Residues 768–780 (KGPPGPMGPPGLA) are compositionally biased toward pro residues. Lys806 carries the post-translational modification 5-hydroxylysine. A compositionally biased stretch (pro residues) spans 815–830 (SGPPGAPGAPGAPGPV). A 4-hydroxyproline mark is found at Pro818, Pro821, and Pro824. The segment covering 851–865 (AGPAGARGPAGPQGP) has biased composition (low complexity). Basic and acidic residues predominate over residues 866-880 (RGDKGETGEQGDRGI). A 5-hydroxylysine modification is found at Lys869. The residue at position 881 (Lys881) is a 5-hydroxylysine; alternate. An O-linked (Gal...) hydroxylysine; alternate glycan is attached at Lys881. Pro896, Pro899, Pro917, and Pro932 each carry 4-hydroxyproline. Positions 899–932 (PGEQGPSGASGPAGPRGPPGSAGSPGKDGLNGLP) are enriched in low complexity. Position 937 is a 3-hydroxyproline (Pro937). 4-hydroxyproline is present on Pro938. The span at 950 to 965 (VGPPGPPGPPGPPGPP) shows a compositional bias: pro residues. The residue at position 952 (Pro952) is a 3-hydroxyproline. The residue at position 953 (Pro953) is a 4-hydroxyproline. Pro955 is modified (3-hydroxyproline). The residue at position 956 (Pro956) is a 4-hydroxyproline. At Pro958 the chain carries 3-hydroxyproline. 4-hydroxyproline is present on residues Pro959, Pro962, and Pro965.

Belongs to the fibrillar collagen family. In terms of assembly, trimers of one alpha 2(I) and two alpha 1(I) chains. Contains mostly 4-hydroxyproline. Proline residues at the third position of the tripeptide repeating unit (G-X-Y) are hydroxylated in some or all of the chains. Post-translationally, contains 3-hydroxyproline at a few sites. This modification occurs on the first proline residue in the sequence motif Gly-Pro-Hyp, where Hyp is 4-hydroxyproline. In terms of processing, lysine residues at the third position of the tripeptide repeating unit (G-X-Y) are 5-hydroxylated in some or all of the chains. O-glycosylated on hydroxylated lysine residues. The O-linked glycan consists of a Glc-Gal disaccharide. As to expression, expressed in bones.

Its subcellular location is the secreted. The protein resides in the extracellular space. The protein localises to the extracellular matrix. Its function is as follows. Type I collagen is a member of group I collagen (fibrillar forming collagen). This Scelidotherium sp. (strain SLP-2019) (South American ground sloth) protein is Collagen alpha-1(I) chain.